A 167-amino-acid polypeptide reads, in one-letter code: Ribosome maturation factor RimM (167 aa).

The PRC barrel domain occupies 94–165; sequence ENEFYYSDII…KIIITPMEGL (72 aa).

The protein belongs to the RimM family. As to quaternary structure, binds ribosomal protein uS19.

It localises to the cytoplasm. Functionally, an accessory protein needed during the final step in the assembly of 30S ribosomal subunit, possibly for assembly of the head region. Essential for efficient processing of 16S rRNA. May be needed both before and after RbfA during the maturation of 16S rRNA. It has affinity for free ribosomal 30S subunits but not for 70S ribosomes. This is Ribosome maturation factor RimM from Staphylococcus aureus (strain NCTC 8325 / PS 47).